Consider the following 366-residue polypeptide: G kinase-anchoring protein 1 (366 aa).

An interaction with IRS1 region spans residues 1–95; it reads MASAVLSSVP…SHAVCNAQHD (95 aa). Disordered regions lie at residues 20-110 and 147-177; these read QVDS…REEN and EYEDAENTSTQSKVMNKKDKRKNHQGKDRPL. 3 positions are modified to phosphoserine: Ser23, Ser25, and Ser27. The segment covering 39–50 has biased composition (polar residues); the sequence is TGKSQTLGSKST. Positions 47–77 form a coiled coil; sequence SKSTTNEKKREKRRKKKEQQQSEANELRNLA. Ser106 carries the phosphoserine; by PKG modification. Coiled-coil stretches lie at residues 128–160 and 243–353; these read ADLEKALLLSKLEYEEHKKEYEDAENTSTQSKV and EHNQ…YQGG.

This sequence belongs to the GKAP1 family. As to quaternary structure, interacts with PRKG1 and IRS1.

The protein resides in the golgi apparatus. Functionally, regulates insulin-dependent IRS1 tyrosine phosphorylation in adipocytes by modulating the availability of IRS1 to IR tyrosine kinase. Its association with IRS1 is required for insulin-induced translocation of SLC2A4 to the cell membrane. Involved in TNF-induced impairment of insulin-dependent IRS1 tyrosine phosphorylation. The chain is G kinase-anchoring protein 1 (GKAP1) from Homo sapiens (Human).